Consider the following 810-residue polypeptide: Probable dehydratase YbiW (810 aa).

Positions 11 to 682 (DRIKAHKNAL…QTMATPDGRK (672 aa)) constitute a PFL domain. Positions 677–699 (TPDGRKAHTPLAEGASPASGTDH) are disordered. Residues 689 to 810 (EGASPASGTD…DIIARTEHML (122 aa)) form the Glycine radical domain. The residue at position 786 (glycine 786) is a Glycine radical.

The protein belongs to the glycyl radical enzyme (GRE) family.

Functionally, probably shows dehydratase activity. The sequence is that of Probable dehydratase YbiW (ybiW) from Escherichia coli (strain K12).